A 334-amino-acid polypeptide reads, in one-letter code: Nucleoid-associated protein plu2870 (334 aa).

Belongs to the YejK family.

The protein localises to the cytoplasm. Its subcellular location is the nucleoid. This chain is Nucleoid-associated protein plu2870, found in Photorhabdus laumondii subsp. laumondii (strain DSM 15139 / CIP 105565 / TT01) (Photorhabdus luminescens subsp. laumondii).